The chain runs to 275 residues: Large ribosomal subunit protein uL2 (275 aa).

A disordered region spans residues 223-275 (GVVMNPVDHPHGGGEGRGKGHHPQSPWGVPAKGYKTRRGKRASDKFIVRRRNG). Residues 230–240 (DHPHGGGEGRG) show a composition bias toward basic and acidic residues.

It belongs to the universal ribosomal protein uL2 family. As to quaternary structure, part of the 50S ribosomal subunit. Forms a bridge to the 30S subunit in the 70S ribosome.

Functionally, one of the primary rRNA binding proteins. Required for association of the 30S and 50S subunits to form the 70S ribosome, for tRNA binding and peptide bond formation. It has been suggested to have peptidyltransferase activity; this is somewhat controversial. Makes several contacts with the 16S rRNA in the 70S ribosome. This is Large ribosomal subunit protein uL2 from Fervidobacterium nodosum (strain ATCC 35602 / DSM 5306 / Rt17-B1).